A 233-amino-acid chain; its full sequence is Hydroxyacylglutathione hydrolase (233 aa).

7 residues coordinate Zn(2+): His52, His54, Asp56, His57, His108, Asp125, and His163.

It belongs to the metallo-beta-lactamase superfamily. Glyoxalase II family. In terms of assembly, monomer. Zn(2+) is required as a cofactor.

The enzyme catalyses an S-(2-hydroxyacyl)glutathione + H2O = a 2-hydroxy carboxylate + glutathione + H(+). It functions in the pathway secondary metabolite metabolism; methylglyoxal degradation; (R)-lactate from methylglyoxal: step 2/2. Functionally, thiolesterase that catalyzes the hydrolysis of S-D-lactoyl-glutathione to form glutathione and D-lactic acid. The protein is Hydroxyacylglutathione hydrolase of Pasteurella multocida (strain Pm70).